Here is a 160-residue protein sequence, read N- to C-terminus: Ribosomal RNA large subunit methyltransferase H (160 aa).

Residues leucine 77, glycine 109, and 128–133 (LSNLTF) each bind S-adenosyl-L-methionine.

This sequence belongs to the RNA methyltransferase RlmH family. As to quaternary structure, homodimer.

It localises to the cytoplasm. The enzyme catalyses pseudouridine(1915) in 23S rRNA + S-adenosyl-L-methionine = N(3)-methylpseudouridine(1915) in 23S rRNA + S-adenosyl-L-homocysteine + H(+). In terms of biological role, specifically methylates the pseudouridine at position 1915 (m3Psi1915) in 23S rRNA. The polypeptide is Ribosomal RNA large subunit methyltransferase H (Desulforamulus reducens (strain ATCC BAA-1160 / DSM 100696 / MI-1) (Desulfotomaculum reducens)).